We begin with the raw amino-acid sequence, 877 residues long: Alanine--tRNA ligase (877 aa).

Histidine 556, histidine 560, cysteine 657, and histidine 661 together coordinate Zn(2+).

This sequence belongs to the class-II aminoacyl-tRNA synthetase family. The cofactor is Zn(2+).

The protein resides in the cytoplasm. It carries out the reaction tRNA(Ala) + L-alanine + ATP = L-alanyl-tRNA(Ala) + AMP + diphosphate. In terms of biological role, catalyzes the attachment of alanine to tRNA(Ala) in a two-step reaction: alanine is first activated by ATP to form Ala-AMP and then transferred to the acceptor end of tRNA(Ala). Also edits incorrectly charged Ser-tRNA(Ala) and Gly-tRNA(Ala) via its editing domain. This chain is Alanine--tRNA ligase, found in Wolbachia pipientis wMel.